Reading from the N-terminus, the 349-residue chain is Anthranilate phosphoribosyltransferase (349 aa).

5-phospho-alpha-D-ribose 1-diphosphate-binding positions include G82, 85-86, 92-95, 110-118, and S122; these read GD, NVSS, and KHGNRAVSG. Residue G82 coordinates anthranilate. S94 provides a ligand contact to Mg(2+). Anthranilate is bound at residue N113. R168 provides a ligand contact to anthranilate. Mg(2+)-binding residues include D227 and E228.

The protein belongs to the anthranilate phosphoribosyltransferase family. As to quaternary structure, homodimer. Mg(2+) serves as cofactor.

It catalyses the reaction N-(5-phospho-beta-D-ribosyl)anthranilate + diphosphate = 5-phospho-alpha-D-ribose 1-diphosphate + anthranilate. Its pathway is amino-acid biosynthesis; L-tryptophan biosynthesis; L-tryptophan from chorismate: step 2/5. Its function is as follows. Catalyzes the transfer of the phosphoribosyl group of 5-phosphorylribose-1-pyrophosphate (PRPP) to anthranilate to yield N-(5'-phosphoribosyl)-anthranilate (PRA). This chain is Anthranilate phosphoribosyltransferase, found in Pseudomonas aeruginosa (strain LESB58).